Reading from the N-terminus, the 712-residue chain is Polyribonucleotide nucleotidyltransferase (712 aa).

Residues aspartate 487 and aspartate 493 each contribute to the Mg(2+) site. In terms of domain architecture, KH spans 554–613 (PKILTMQINPEKIREVIGPSGKQINKIIDETGVKIDIEQDGTIFISSVNEAMNQKAKQII). One can recognise an S1 motif domain in the interval 623–691 (GQIYLGKVKR…KQGRVNLSRK (69 aa)).

Belongs to the polyribonucleotide nucleotidyltransferase family. The cofactor is Mg(2+).

It is found in the cytoplasm. The catalysed reaction is RNA(n+1) + phosphate = RNA(n) + a ribonucleoside 5'-diphosphate. Its function is as follows. Involved in mRNA degradation. Catalyzes the phosphorolysis of single-stranded polyribonucleotides processively in the 3'- to 5'-direction. This Geobacillus sp. (strain WCH70) protein is Polyribonucleotide nucleotidyltransferase.